The chain runs to 114 residues: Flagellar hook-basal body complex protein FliE (114 aa).

Belongs to the FliE family.

It localises to the bacterial flagellum basal body. This chain is Flagellar hook-basal body complex protein FliE, found in Burkholderia lata (strain ATCC 17760 / DSM 23089 / LMG 22485 / NCIMB 9086 / R18194 / 383).